A 589-amino-acid polypeptide reads, in one-letter code: 3-hydroxy-3-methylglutaryl coenzyme A reductase 2-B (589 aa).

The Lumenal segment spans residues 1-35 (MDVRRRPVTKTLTAGEPLKSQNQHSSSLKASDALP). The chain crosses the membrane as a helical span at residues 36–56 (LPLYLTNGLFFTMFFSVMYFL). The Cytoplasmic segment spans residues 57–79 (LHRWREKIRNSVPLHVVTLSELA). A helical membrane pass occupies residues 80–100 (ALVLLVASVIYLLGFFGIGFV). Residues 101–544 (QSLIRPSPDS…SKESPGPNSR (444 aa)) lie on the Lumenal side of the membrane. The N-linked (GlcNAc...) asparagine glycan is linked to Asn256. The active-site Charge relay system is Glu268. An N-linked (GlcNAc...) asparagine glycan is attached at Asn332. Catalysis depends on charge relay system residues Lys400 and Asp476. A helical transmembrane segment spans residues 545 to 565 (LLASIVAGSVLAGELSLMSAL). Over 566-589 (AAGQLVKSHMKFNRSSKDVSKLSS) the chain is Cytoplasmic. His574 acts as the Proton donor in catalysis.

This sequence belongs to the HMG-CoA reductase family.

The protein resides in the endoplasmic reticulum membrane. The enzyme catalyses (R)-mevalonate + 2 NADP(+) + CoA = (3S)-3-hydroxy-3-methylglutaryl-CoA + 2 NADPH + 2 H(+). Its pathway is metabolic intermediate biosynthesis; (R)-mevalonate biosynthesis; (R)-mevalonate from acetyl-CoA: step 3/3. Catalyzes the synthesis of mevalonate, the specific precursor of all isoprenoid compounds present in plants. Component of the triterpene saponins (e.g. ginsenosides or panaxosides) and phytosterols biosynthetic pathways. Promotes triterpenes accumulation in roots. This Panax ginseng (Korean ginseng) protein is 3-hydroxy-3-methylglutaryl coenzyme A reductase 2-B.